Reading from the N-terminus, the 259-residue chain is DNA-directed RNA polymerase 30 kDa polypeptide (259 aa).

Residues 155-195 (YNTPCPNCKSRNTTPMMIQTRAADEPPLVRHACRDCKQHFK) form a TFIIS-type zinc finger. Zn(2+)-binding residues include cysteine 159, cysteine 162, cysteine 187, and cysteine 190. A disordered region spans residues 220–259 (EILPDNNPSPPESPEPASPIDDGLIRATFDRNDEPPEDDE). The segment covering 226 to 236 (NPSPPESPEPA) has biased composition (pro residues).

It belongs to the poxviridae DNA-directed RNA polymerase 30 kDa subunit family. As to quaternary structure, the DNA-dependent RNA polymerase (vRNAP) consists of eight subunits encoded by early viral genes and termed according to their apparent molecular masses Rpo147, Rpo132, Rpo35, Rpo30, Rpo22, Rpo19, Rpo18, and Rpo7. The same holoenzyme, with the addition of the transcription-specificity factor RAP94, is used for early gene expression.

It is found in the virion. Its subcellular location is the host cytoplasm. It carries out the reaction RNA(n) + a ribonucleoside 5'-triphosphate = RNA(n+1) + diphosphate. Its function is as follows. Part of the DNA-dependent RNA polymerase which catalyzes the transcription of viral DNA into RNA using the four ribonucleoside triphosphates as substrates. Responsible for the transcription of early, intermediate and late genes. DNA-dependent RNA polymerase associates with the early transcription factor (ETF), itself composed of OPG118 and OPG134, thereby allowing the early genes transcription. Late transcription, and probably also intermediate transcription, require newly synthesized RNA polymerase. In Bos taurus (Bovine), this protein is DNA-directed RNA polymerase 30 kDa polypeptide (OPG066).